Reading from the N-terminus, the 340-residue chain is Ketol-acid reductoisomerase (NADP(+)) (340 aa).

The 180-residue stretch at 3-182 (VTMYYEEDVE…GCARVGIIET (180 aa)) folds into the KARI N-terminal Rossmann domain. NADP(+) contacts are provided by residues 26-29 (YGSQ), R49, S53, and 83-86 (DELQ). H108 is a catalytic residue. G134 contributes to the NADP(+) binding site. The KARI C-terminal knotted domain occupies 183–328 (TFKEETEEDL…AELRKAMPFT (146 aa)). Mg(2+) contacts are provided by D191, E195, E227, and E231. S252 is a substrate binding site.

Belongs to the ketol-acid reductoisomerase family. Mg(2+) serves as cofactor.

It catalyses the reaction (2R)-2,3-dihydroxy-3-methylbutanoate + NADP(+) = (2S)-2-acetolactate + NADPH + H(+). It carries out the reaction (2R,3R)-2,3-dihydroxy-3-methylpentanoate + NADP(+) = (S)-2-ethyl-2-hydroxy-3-oxobutanoate + NADPH + H(+). It functions in the pathway amino-acid biosynthesis; L-isoleucine biosynthesis; L-isoleucine from 2-oxobutanoate: step 2/4. Its pathway is amino-acid biosynthesis; L-valine biosynthesis; L-valine from pyruvate: step 2/4. In terms of biological role, involved in the biosynthesis of branched-chain amino acids (BCAA). Catalyzes an alkyl-migration followed by a ketol-acid reduction of (S)-2-acetolactate (S2AL) to yield (R)-2,3-dihydroxy-isovalerate. In the isomerase reaction, S2AL is rearranged via a Mg-dependent methyl migration to produce 3-hydroxy-3-methyl-2-ketobutyrate (HMKB). In the reductase reaction, this 2-ketoacid undergoes a metal-dependent reduction by NADPH to yield (R)-2,3-dihydroxy-isovalerate. In Lactococcus lactis subsp. cremoris (strain MG1363), this protein is Ketol-acid reductoisomerase (NADP(+)).